Here is a 437-residue protein sequence, read N- to C-terminus: Trigger factor (437 aa).

In terms of domain architecture, PPIase FKBP-type spans 161–246 (GDRVNIDFKG…VNKVEGKALP (86 aa)).

The protein belongs to the FKBP-type PPIase family. Tig subfamily.

Its subcellular location is the cytoplasm. It carries out the reaction [protein]-peptidylproline (omega=180) = [protein]-peptidylproline (omega=0). Involved in protein export. Acts as a chaperone by maintaining the newly synthesized protein in an open conformation. Functions as a peptidyl-prolyl cis-trans isomerase. In Alcanivorax borkumensis (strain ATCC 700651 / DSM 11573 / NCIMB 13689 / SK2), this protein is Trigger factor.